The primary structure comprises 137 residues: Nucleoside diphosphate kinase (137 aa).

Positions 9, 57, 85, 91, 102, and 112 each coordinate ATP. Histidine 115 acts as the Pros-phosphohistidine intermediate in catalysis.

Belongs to the NDK family. As to quaternary structure, homotetramer. The cofactor is Mg(2+).

It is found in the cytoplasm. It carries out the reaction a 2'-deoxyribonucleoside 5'-diphosphate + ATP = a 2'-deoxyribonucleoside 5'-triphosphate + ADP. It catalyses the reaction a ribonucleoside 5'-diphosphate + ATP = a ribonucleoside 5'-triphosphate + ADP. Major role in the synthesis of nucleoside triphosphates other than ATP. The ATP gamma phosphate is transferred to the NDP beta phosphate via a ping-pong mechanism, using a phosphorylated active-site intermediate. The sequence is that of Nucleoside diphosphate kinase from Wolinella succinogenes (strain ATCC 29543 / DSM 1740 / CCUG 13145 / JCM 31913 / LMG 7466 / NCTC 11488 / FDC 602W) (Vibrio succinogenes).